A 309-amino-acid chain; its full sequence is UDP-N-acetylenolpyruvoylglucosamine reductase (309 aa).

The FAD-binding PCMH-type domain maps to 33 to 195 (VGGQAETLFR…VRARLRTRPG (163 aa)). Arg175 is a catalytic residue. Ser224 (proton donor) is an active-site residue. Glu294 is a catalytic residue.

This sequence belongs to the MurB family. Requires FAD as cofactor.

Its subcellular location is the cytoplasm. The enzyme catalyses UDP-N-acetyl-alpha-D-muramate + NADP(+) = UDP-N-acetyl-3-O-(1-carboxyvinyl)-alpha-D-glucosamine + NADPH + H(+). It participates in cell wall biogenesis; peptidoglycan biosynthesis. Its function is as follows. Cell wall formation. The protein is UDP-N-acetylenolpyruvoylglucosamine reductase of Granulibacter bethesdensis (strain ATCC BAA-1260 / CGDNIH1).